The chain runs to 333 residues: Regulator of rDNA transcription protein 5 (333 aa).

The tract at residues 1 to 22 is disordered; it reads MFERQSNNPEPIEVSDNNPERE. The RRM 1 domain maps to 31–114; it reads TRIYISNLDY…RNLKVKLYVP (84 aa). 2 disordered regions span residues 123 to 185 and 281 to 333; these read PAPK…DTVY and GIAE…SVVA. Positions 125-137 are enriched in basic residues; sequence PKPRRLSKLRRSK. 2 stretches are compositionally biased toward polar residues: residues 145-160 and 169-182; these read NAAS…QERG and AANN…TSDD. One can recognise an RRM 2 domain in the interval 182-267; sequence DTVYCGYLPK…KKISVKPAYI (86 aa). Over residues 298–308 the composition is skewed to gly residues; sequence GNGGQPAGPGV. The segment covering 313 to 327 has biased composition (polar residues); the sequence is SNPQQNCDNSNNVQP.

The protein belongs to the RRT5 family.

Functionally, may be involved in the modulation of rDNA transcription. This is Regulator of rDNA transcription protein 5 (RRT5) from Vanderwaltozyma polyspora (strain ATCC 22028 / DSM 70294 / BCRC 21397 / CBS 2163 / NBRC 10782 / NRRL Y-8283 / UCD 57-17) (Kluyveromyces polysporus).